Reading from the N-terminus, the 223-residue chain is Deoxyribose-phosphate aldolase (223 aa).

The active-site Proton donor/acceptor is Asp89. Lys152 serves as the catalytic Schiff-base intermediate with acetaldehyde. The active-site Proton donor/acceptor is the Lys181.

It belongs to the DeoC/FbaB aldolase family. DeoC type 1 subfamily.

It is found in the cytoplasm. The enzyme catalyses 2-deoxy-D-ribose 5-phosphate = D-glyceraldehyde 3-phosphate + acetaldehyde. It functions in the pathway carbohydrate degradation; 2-deoxy-D-ribose 1-phosphate degradation; D-glyceraldehyde 3-phosphate and acetaldehyde from 2-deoxy-alpha-D-ribose 1-phosphate: step 2/2. Catalyzes a reversible aldol reaction between acetaldehyde and D-glyceraldehyde 3-phosphate to generate 2-deoxy-D-ribose 5-phosphate. The polypeptide is Deoxyribose-phosphate aldolase (Listeria monocytogenes serotype 4a (strain HCC23)).